The sequence spans 300 residues: uncharacterized protein (300 aa).

Positions 1–11 (MYNEGVTSPSQ) are enriched in polar residues. A disordered region spans residues 1–20 (MYNEGVTSPSQLARKKNATD). Positions 1-92 (MYNEGVTSPS…QEILITRKRR (92 aa)) form a DNA-binding region, recombinase. Positions 162–249 (SKENYFKELS…DLEFQKIEKE (88 aa)) form a coiled coil.

This is an uncharacterized protein from Bacillus subtilis (strain 168).